We begin with the raw amino-acid sequence, 658 residues long: Translation factor GUF1, mitochondrial (658 aa).

One can recognise a tr-type G domain in the interval 45–231 (ENYRNFSIVA…AVIDRIPPPT (187 aa)). GTP contacts are provided by residues 54–61 (AHIDHGKS), 123–127 (DTPGH), and 177–180 (NKID).

This sequence belongs to the TRAFAC class translation factor GTPase superfamily. Classic translation factor GTPase family. LepA subfamily.

It is found in the mitochondrion inner membrane. The catalysed reaction is GTP + H2O = GDP + phosphate + H(+). Promotes mitochondrial protein synthesis. May act as a fidelity factor of the translation reaction, by catalyzing a one-codon backward translocation of tRNAs on improperly translocated ribosomes. Binds to mitochondrial ribosomes in a GTP-dependent manner. The chain is Translation factor GUF1, mitochondrial from Vanderwaltozyma polyspora (strain ATCC 22028 / DSM 70294 / BCRC 21397 / CBS 2163 / NBRC 10782 / NRRL Y-8283 / UCD 57-17) (Kluyveromyces polysporus).